Consider the following 523-residue polypeptide: MSNRVIIFDTTLRDGEQALAASLTVKEKLQIALALERLGVDVMEVGFPVSSPGDFESVQTIAKTIKNSRVCALSRALESDIDAAAQALSVAEQFRIHTFISTSTIHVENKLKRSFDQVLDMAVGAVKYARRFTDDVEFSCEDAGRTPIDNLCRMVEEAIKAGARTINIPDTVGYTVPSEFGGIIQTLFNRVPNIDQAVISVHCHDDLGLSVANSITAVQHGARQIECTVNGIGERAGNCSLEEIAMILSTRKGELGLETGINAKEIHRTSSLVSQLCNMPVQANKAIVGANAFTHSSGIHQDGMLKAQNTYEIMTPESIGLNRNNLNMTSRSGRHVIKHRMSELGYGEQDYDMDVLYEEFLALADKKGQVFDYDLEALAFMEAQAEDDDHFELQQLVVHSDSTEGSATATVKVAVNGETITEAATGNGPVDAAYKAVARASGCKTNITSYQLSAKGEGHNALGQVDITAKYREQNFHGVGLATDVVEASAKALIHVMNLTWRADKVADCKQRIQQNKQEFGSV.

The Pyruvate carboxyltransferase domain occupies 5 to 267 (VIIFDTTLRD…ETGINAKEIH (263 aa)). Asp14, His202, His204, and Asn238 together coordinate Mn(2+). Residues 392 to 523 (ELQQLVVHSD…QQNKQEFGSV (132 aa)) are regulatory domain.

The protein belongs to the alpha-IPM synthase/homocitrate synthase family. LeuA type 1 subfamily. In terms of assembly, homodimer. Mn(2+) is required as a cofactor.

The protein localises to the cytoplasm. It carries out the reaction 3-methyl-2-oxobutanoate + acetyl-CoA + H2O = (2S)-2-isopropylmalate + CoA + H(+). It functions in the pathway amino-acid biosynthesis; L-leucine biosynthesis; L-leucine from 3-methyl-2-oxobutanoate: step 1/4. Functionally, catalyzes the condensation of the acetyl group of acetyl-CoA with 3-methyl-2-oxobutanoate (2-ketoisovalerate) to form 3-carboxy-3-hydroxy-4-methylpentanoate (2-isopropylmalate). The chain is 2-isopropylmalate synthase from Shewanella halifaxensis (strain HAW-EB4).